Consider the following 291-residue polypeptide: 33 kDa chaperonin (291 aa).

Cystine bridges form between cysteine 237-cysteine 239 and cysteine 270-cysteine 273.

Belongs to the HSP33 family. Post-translationally, under oxidizing conditions two disulfide bonds are formed involving the reactive cysteines. Under reducing conditions zinc is bound to the reactive cysteines and the protein is inactive.

It is found in the cytoplasm. In terms of biological role, redox regulated molecular chaperone. Protects both thermally unfolding and oxidatively damaged proteins from irreversible aggregation. Plays an important role in the bacterial defense system toward oxidative stress. The polypeptide is 33 kDa chaperonin (Clostridioides difficile (strain 630) (Peptoclostridium difficile)).